The primary structure comprises 426 residues: Glucan 1,3-beta-glucosidase (426 aa).

An N-terminal signal peptide occupies residues 1–20 (MLYPRALLPAAVALASLVLA). Glutamate 208 acts as the Proton donor in catalysis. Intrachain disulfides connect cysteine 290–cysteine 416 and cysteine 315–cysteine 343. Glutamate 307 acts as the Nucleophile in catalysis.

It belongs to the glycosyl hydrolase 5 (cellulase A) family.

Its subcellular location is the secreted. The catalysed reaction is Successive hydrolysis of beta-D-glucose units from the non-reducing ends of (1-&gt;3)-beta-D-glucans, releasing alpha-glucose.. Functionally, beta-glucanases participate in the metabolism of beta-glucan, the main structural component of the cell wall. It could also function biosynthetically as a transglycosylase. The sequence is that of Glucan 1,3-beta-glucosidase from Blumeria graminis (Powdery mildew).